A 426-amino-acid chain; its full sequence is Formate-dependent phosphoribosylglycinamide formyltransferase (426 aa).

N(1)-(5-phospho-beta-D-ribosyl)glycinamide contacts are provided by residues 26 to 27 (EL) and Glu86. ATP-binding positions include Arg118, Lys158, 197-200 (EEFI), and Glu205. Positions 123–324 (EAIASTGART…EFALHAKAVL (202 aa)) constitute an ATP-grasp domain. Residues Glu279 and Glu293 each coordinate Mg(2+). N(1)-(5-phospho-beta-D-ribosyl)glycinamide contacts are provided by residues Asp300, Lys374, and 381–382 (RR).

It belongs to the PurK/PurT family. As to quaternary structure, homodimer.

It catalyses the reaction N(1)-(5-phospho-beta-D-ribosyl)glycinamide + formate + ATP = N(2)-formyl-N(1)-(5-phospho-beta-D-ribosyl)glycinamide + ADP + phosphate + H(+). The protein operates within purine metabolism; IMP biosynthesis via de novo pathway; N(2)-formyl-N(1)-(5-phospho-D-ribosyl)glycinamide from N(1)-(5-phospho-D-ribosyl)glycinamide (formate route): step 1/1. Its function is as follows. Involved in the de novo purine biosynthesis. Catalyzes the transfer of formate to 5-phospho-ribosyl-glycinamide (GAR), producing 5-phospho-ribosyl-N-formylglycinamide (FGAR). Formate is provided by PurU via hydrolysis of 10-formyl-tetrahydrofolate. This chain is Formate-dependent phosphoribosylglycinamide formyltransferase, found in Methanocella arvoryzae (strain DSM 22066 / NBRC 105507 / MRE50).